The primary structure comprises 407 residues: B3 domain-containing protein Os07g0183200 (407 aa).

Positions 124-227 form a DNA-binding region, TF-B3; that stretch reads FVKTLMISDF…ELYVGVRRQR (104 aa).

It is found in the nucleus. The sequence is that of B3 domain-containing protein Os07g0183200 from Oryza sativa subsp. japonica (Rice).